We begin with the raw amino-acid sequence, 627 residues long: UvrABC system protein C (627 aa).

One can recognise a GIY-YIG domain in the interval 26 to 105 (PSPGVYQFRN…IKELKPRYNV (80 aa)). A UVR domain is found at 219 to 254 (STMIRSLTSAMQLFARELKFERAAEIKMQLESLKRY).

Belongs to the UvrC family. Interacts with UvrB in an incision complex.

The protein localises to the cytoplasm. Functionally, the UvrABC repair system catalyzes the recognition and processing of DNA lesions. UvrC both incises the 5' and 3' sides of the lesion. The N-terminal half is responsible for the 3' incision and the C-terminal half is responsible for the 5' incision. In Pelodictyon phaeoclathratiforme (strain DSM 5477 / BU-1), this protein is UvrABC system protein C.